The sequence spans 252 residues: Hsp70-Hsp90 organising protein (252 aa).

3 TPR repeats span residues 7–40 (AQRL…DPLD), 41–74 (HVLY…KKDW), and 75–108 (PKGY…DPNN). The stretch at 197–239 (EGNDAEERQRQQREEEERRKKKEEEERKKKEEEEMKKQNRTPE) forms a coiled coil. The disordered stretch occupies residues 199-252 (NDAEERQRQQREEEERRKKKEEEERKKKEEEEMKKQNRTPEQIQGDEHKLKVMN). Basic and acidic residues-rich tracts occupy residues 201-233 (AEER…EMKK) and 243-252 (GDEHKLKVMN).

As to quaternary structure, monomer. Homodimer. Forms a complex composed of HOP and chaperones HSP70 and HSP90; the interaction is stronger in the absence of ATP. Interacts (via TPR 1, 2, 3, 7, 8 and 9 repeats) with HSP70 (via C-terminus); the interaction is direct and is stronger in the absence of ATP. Interacts (via TPR 4, 5 and 6 repeats) with HSP90 (via C-terminus); the interaction is direct.

It localises to the cytoplasm. Its function is as follows. Acts as a co-chaperone and mediates the association of the chaperones HSP70 and HSP90 probably facilitating substrate transfer from HSP70 to HSP90. Stimulates HSP70 ATPase activity and, in contrast, inhibits HSP90 ATPase activity. The sequence is that of Hsp70-Hsp90 organising protein from Plasmodium falciparum.